The primary structure comprises 574 residues: Cytochrome P450 4g15 (574 aa).

The segment at 288–327 (REREQNGGVDQTPSTAGSDEKDREKDKEKASPVAGLSYGQ) is disordered. The span at 295–304 (GVDQTPSTAG) shows a compositional bias: polar residues. Residues 305 to 317 (SDEKDREKDKEKA) show a composition bias toward basic and acidic residues. The heme site is built by Glu-379 and Cys-519.

This sequence belongs to the cytochrome P450 family. Heme is required as a cofactor. Expressed in larval brain cortex cells and ring glands and weakly in larval digestive system and adult nervous system.

It is found in the endoplasmic reticulum membrane. The protein localises to the microsome membrane. In terms of biological role, probably involved in steroid hormones biosynthesis. The polypeptide is Cytochrome P450 4g15 (Cyp4g15) (Drosophila melanogaster (Fruit fly)).